The following is a 247-amino-acid chain: Fumarate reductase iron-sulfur subunit (247 aa).

Residue Y12 participates in a menaquinone binding. The region spanning 14 to 94 (PEIESAPTFQ…PGPVRVEPMR (81 aa)) is the 2Fe-2S ferredoxin-type domain. The [2Fe-2S] cluster site is built by C56, C61, and C76. Residues 140-169 (LDAFKQFSMCINCMLCYSACPVYALDPDFL) form the 4Fe-4S ferredoxin-type domain. 3 residues coordinate [4Fe-4S] cluster: C149, C152, and C155. Residues C159, C205, and C211 each contribute to the [3Fe-4S] cluster site. [4Fe-4S] cluster is bound at residue C215. 226–229 (QRYK) is an a menaquinone binding site.

Belongs to the succinate dehydrogenase/fumarate reductase iron-sulfur protein family. In terms of assembly, fumarate dehydrogenase forms part of an enzyme complex containing four subunits: a flavoprotein, an iron-sulfur, and two hydrophobic anchor proteins. Requires [2Fe-2S] cluster as cofactor. [3Fe-4S] cluster serves as cofactor. The cofactor is [4Fe-4S] cluster.

It localises to the cell membrane. The catalysed reaction is a quinone + succinate = fumarate + a quinol. It catalyses the reaction a menaquinone + succinate = a menaquinol + fumarate. This is Fumarate reductase iron-sulfur subunit (frdB) from Mycobacterium tuberculosis (strain CDC 1551 / Oshkosh).